The chain runs to 357 residues: Aspartate carbamoyltransferase catalytic subunit (357 aa).

Residues 1–15 (MSNSIDSQSLPTVSP) are compositionally biased toward polar residues. A disordered region spans residues 1–21 (MSNSIDSQSLPTVSPTDYARF). Residues R97 and T98 each coordinate carbamoyl phosphate. K125 is an L-aspartate binding site. 3 residues coordinate carbamoyl phosphate: R147, H177, and Q180. L-aspartate contacts are provided by R211 and R266. G307 and P308 together coordinate carbamoyl phosphate.

Belongs to the aspartate/ornithine carbamoyltransferase superfamily. ATCase family. In terms of assembly, heterododecamer (2C3:3R2) of six catalytic PyrB chains organized as two trimers (C3), and six regulatory PyrI chains organized as three dimers (R2).

It carries out the reaction carbamoyl phosphate + L-aspartate = N-carbamoyl-L-aspartate + phosphate + H(+). It participates in pyrimidine metabolism; UMP biosynthesis via de novo pathway; (S)-dihydroorotate from bicarbonate: step 2/3. Functionally, catalyzes the condensation of carbamoyl phosphate and aspartate to form carbamoyl aspartate and inorganic phosphate, the committed step in the de novo pyrimidine nucleotide biosynthesis pathway. The protein is Aspartate carbamoyltransferase catalytic subunit of Psychrobacter cryohalolentis (strain ATCC BAA-1226 / DSM 17306 / VKM B-2378 / K5).